A 209-amino-acid chain; its full sequence is Chalcone isomerase-like protein 2 (209 aa).

The protein belongs to the chalcone isomerase family. As to quaternary structure, component an active demethylxanthohumol (DMX) biosynthetic metabolon in glandular trichomes (lupulin glands) that encompasses a chalcone synthase (CHS) and a membrane-bound prenyltransferase. Interacts with CHS_H1 and PT1L. Mostly expressed in glandular trichomes (lupulin glands), and, to a lower extent, in cones, cones bracts, leaves, stems and roots.

The protein localises to the cytoplasm. It carries out the reaction a chalcone = a flavanone.. It functions in the pathway secondary metabolite biosynthesis; flavonoid biosynthesis. Its function is as follows. Involved in the biosynthesis of prenylated phenolics natural products which contribute to the bitter taste of beer and display broad biological activities. Involved in anthocyanin biosynthesis. Polyketide binding proteins (PBP) which promotes the catalytic activities of CHS_H1 and PT1L and triggers demethylxanthohumol (DMX) production. In Humulus lupulus (European hop), this protein is Chalcone isomerase-like protein 2.